Consider the following 441-residue polypeptide: Membrane protein PB1A10.07c (441 aa).

11 helical membrane passes run 1–21 (MGAVLSIPLALASSLSGVVGI), 41–61 (VGAVISYAVLYFVNSLLSWCM), 97–117 (LSFTLVMFHLFLAFILSLCNT), 128–148 (GLWPFKIVLWFVLGIFSFFIP), 158–178 (IISVMGSALFIVYGLMLLVDF), 206–226 (TVGMYVVGLVLTILTYVFFCA), 235–255 (INTINLLLCIAVSCLSVHPTI), 263–283 (GLAQSSMVMCYTCYLILSALA), 307–327 (VIGAAFTFFTILYSAVRAASS), 364–384 (YNFIWFHIVFVLAAFYTASLL), and 415–435 (IITSWVCHGLYVWSCLAPVFF).

Belongs to the TDE1 family.

Its subcellular location is the membrane. The protein is Membrane protein PB1A10.07c of Schizosaccharomyces pombe (strain 972 / ATCC 24843) (Fission yeast).